The primary structure comprises 405 residues: Nuclear RNA export factor 2 (405 aa).

Residues 1-33 form a disordered region; sequence MRGQNRRGYRNIEGRLSLSSHSSHSSPRQTHVT. The span at 16–26 shows a compositional bias: low complexity; that stretch reads LSLSSHSSHSS. In terms of domain architecture, RRM spans 26 to 94; it reads SPRQTHVTNL…SVVLQHIGYK (69 aa). LRR repeat units follow at residues 97–118 and 123–144; these read RISG…SSLS and FLKF…KKLG. In terms of domain architecture, NTF2 spans 215 to 382; it reads LVEEFIITYY…VAIVSDQLFI (168 aa).

Belongs to the NXF family.

Its subcellular location is the nucleus. In terms of biological role, involved in the export of cellular mRNA to the cytoplasm. Plays a role in the nuclear retention of unspliced mRNAs. This is Nuclear RNA export factor 2 from Caenorhabditis elegans.